A 154-amino-acid polypeptide reads, in one-letter code: MSNQMNTMDITEILKYLPHRYPFLLIDRVLDYTPGESLHAIKNVTINEPFFQGHFPVQPVMPGVLILEAMAQATGLLAFKTMSDDVPPPGVLYYFAGIDNARFRRVVEPGDQIHFDVKMIKERRGIGVFYGEAKVDGEVVCSAEIMCARREINQ.

Residue His54 is part of the active site.

This sequence belongs to the thioester dehydratase family. FabZ subfamily.

Its subcellular location is the cytoplasm. It catalyses the reaction a (3R)-hydroxyacyl-[ACP] = a (2E)-enoyl-[ACP] + H2O. Functionally, involved in unsaturated fatty acids biosynthesis. Catalyzes the dehydration of short chain beta-hydroxyacyl-ACPs and long chain saturated and unsaturated beta-hydroxyacyl-ACPs. The chain is 3-hydroxyacyl-[acyl-carrier-protein] dehydratase FabZ from Shewanella sp. (strain MR-4).